The primary structure comprises 378 residues: S-adenosylmethionine:tRNA ribosyltransferase-isomerase (378 aa).

The protein belongs to the QueA family. Monomer.

The protein localises to the cytoplasm. It carries out the reaction 7-aminomethyl-7-carbaguanosine(34) in tRNA + S-adenosyl-L-methionine = epoxyqueuosine(34) in tRNA + adenine + L-methionine + 2 H(+). It functions in the pathway tRNA modification; tRNA-queuosine biosynthesis. Transfers and isomerizes the ribose moiety from AdoMet to the 7-aminomethyl group of 7-deazaguanine (preQ1-tRNA) to give epoxyqueuosine (oQ-tRNA). The polypeptide is S-adenosylmethionine:tRNA ribosyltransferase-isomerase (Prochlorococcus marinus (strain MIT 9312)).